The chain runs to 202 residues: Thymidylate kinase (202 aa).

7–14 (GIDGSGKT) serves as a coordination point for ATP.

Belongs to the thymidylate kinase family.

It catalyses the reaction dTMP + ATP = dTDP + ADP. In terms of biological role, phosphorylation of dTMP to form dTDP in both de novo and salvage pathways of dTTP synthesis. The chain is Thymidylate kinase from Ehrlichia chaffeensis (strain ATCC CRL-10679 / Arkansas).